Consider the following 597-residue polypeptide: Arginine--tRNA ligase (597 aa).

The short motif at 137–147 (PNIAKEMHVGH) is the 'HIGH' region element.

Belongs to the class-I aminoacyl-tRNA synthetase family. As to quaternary structure, monomer.

The protein localises to the cytoplasm. It catalyses the reaction tRNA(Arg) + L-arginine + ATP = L-arginyl-tRNA(Arg) + AMP + diphosphate. This chain is Arginine--tRNA ligase, found in Parasynechococcus marenigrum (strain WH8102).